A 208-amino-acid chain; its full sequence is Regulator of G-protein signaling 4 (208 aa).

3 S-palmitoyl cysteine lipidation sites follow: Cys-2, Cys-12, and Cys-95. One can recognise an RGS domain in the interval 62–178 (SLENLIHHDR…LKSPYLDLVS (117 aa)).

Post-translationally, palmitoylated on Cys-2 and/or Cys-12. In terms of processing, phosphorylated by cyclic GMP-dependent protein kinase. As to expression, expressed in the developing nervous system.

Its function is as follows. Inhibits signal transduction by increasing the GTPase activity of G protein alpha subunits thereby driving them into their inactive GDP-bound form. Activity on G(z)-alpha is inhibited by phosphorylation of the G-protein. Activity on G(z)-alpha and G(i)-alpha-1 is inhibited by palmitoylation of the G-protein. In Gallus gallus (Chicken), this protein is Regulator of G-protein signaling 4 (RGS4).